A 304-amino-acid polypeptide reads, in one-letter code: tRNA-uridine aminocarboxypropyltransferase 1 (304 aa).

Ser2 is subject to N-acetylserine. Positions 206 to 209 (DSTW) match the DXTW motif.

It belongs to the TDD superfamily. DTWD1 family.

The protein resides in the nucleus. It catalyses the reaction a uridine in tRNA + S-adenosyl-L-methionine = a 3-[(3S)-3-amino-3-carboxypropyl]uridine in tRNA + S-methyl-5'-thioadenosine + H(+). Its function is as follows. Catalyzes the formation of 3-(3-amino-3-carboxypropyl)uridine (acp3U) at position 20 in the D-loop of several cytoplasmic tRNAs (acp3U(20)). The polypeptide is tRNA-uridine aminocarboxypropyltransferase 1 (Pongo abelii (Sumatran orangutan)).